A 407-amino-acid polypeptide reads, in one-letter code: Argininosuccinate synthase (407 aa).

Residues 13 to 21 (AYSGGLDTS) and alanine 40 contribute to the ATP site. Residues tyrosine 91 and serine 96 each coordinate L-citrulline. Glycine 121 serves as a coordination point for ATP. Residues threonine 123, asparagine 127, and aspartate 128 each coordinate L-aspartate. Asparagine 127 is an L-citrulline binding site. L-citrulline is bound by residues arginine 131, serine 182, serine 191, glutamate 267, and tyrosine 279.

Belongs to the argininosuccinate synthase family. Type 1 subfamily. In terms of assembly, homotetramer.

The protein resides in the cytoplasm. The enzyme catalyses L-citrulline + L-aspartate + ATP = 2-(N(omega)-L-arginino)succinate + AMP + diphosphate + H(+). It functions in the pathway amino-acid biosynthesis; L-arginine biosynthesis; L-arginine from L-ornithine and carbamoyl phosphate: step 2/3. This is Argininosuccinate synthase from Agrobacterium fabrum (strain C58 / ATCC 33970) (Agrobacterium tumefaciens (strain C58)).